The following is a 399-amino-acid chain: Nicotinate phosphoribosyltransferase (399 aa).

His-217 is subject to Phosphohistidine; by autocatalysis.

Belongs to the NAPRTase family. Post-translationally, transiently phosphorylated on a His residue during the reaction cycle. Phosphorylation strongly increases the affinity for substrates and increases the rate of nicotinate D-ribonucleotide production. Dephosphorylation regenerates the low-affinity form of the enzyme, leading to product release.

The catalysed reaction is nicotinate + 5-phospho-alpha-D-ribose 1-diphosphate + ATP + H2O = nicotinate beta-D-ribonucleotide + ADP + phosphate + diphosphate. The protein operates within cofactor biosynthesis; NAD(+) biosynthesis; nicotinate D-ribonucleotide from nicotinate: step 1/1. In terms of biological role, catalyzes the synthesis of beta-nicotinate D-ribonucleotide from nicotinate and 5-phospho-D-ribose 1-phosphate at the expense of ATP. The sequence is that of Nicotinate phosphoribosyltransferase from Burkholderia ambifaria (strain MC40-6).